The primary structure comprises 285 residues: Acetylglutamate kinase (285 aa).

Substrate-binding positions include 69-70 (GG), arginine 91, and asparagine 183.

Belongs to the acetylglutamate kinase family. ArgB subfamily.

It is found in the cytoplasm. It catalyses the reaction N-acetyl-L-glutamate + ATP = N-acetyl-L-glutamyl 5-phosphate + ADP. The protein operates within amino-acid biosynthesis; L-arginine biosynthesis; N(2)-acetyl-L-ornithine from L-glutamate: step 2/4. In terms of biological role, catalyzes the ATP-dependent phosphorylation of N-acetyl-L-glutamate. The protein is Acetylglutamate kinase of Jannaschia sp. (strain CCS1).